Here is a 1173-residue protein sequence, read N- to C-terminus: AT-rich interactive domain-containing protein 5B (1173 aa).

Lys-130 participates in a covalent cross-link: Glycyl lysine isopeptide (Lys-Gly) (interchain with G-Cter in SUMO2). The disordered stretch occupies residues 249 to 283 (PNLKGRPRKKKPCPQRRDSFSGGKDPNNNSDGKSV). The span at 253-262 (GRPRKKKPCP) shows a compositional bias: basic residues. The residue at position 267 (Ser-267) is a Phosphoserine. The region spanning 322-414 (RADEQAFLVA…LILPYERFIK (93 aa)) is the ARID domain. Lys-340 carries the N6,N6-dimethyllysine modification. A disordered region spans residues 416–607 (EEDKPLPPIK…QPPLANQSEV (192 aa)). Lys-449 is covalently cross-linked (Glycyl lysine isopeptide (Lys-Gly) (interchain with G-Cter in SUMO2)). Residues 450–462 (HEISKSKKEKENA) show a composition bias toward basic and acidic residues. Residues Lys-497 and Lys-499 each participate in a glycyl lysine isopeptide (Lys-Gly) (interchain with G-Cter in SUMO2) cross-link. The segment covering 547 to 557 (SAPLAPTPGTG) has biased composition (low complexity). Polar residues predominate over residues 593 to 605 (GFSTTQPPLANQS). Residues Lys-763 and Lys-769 each participate in a glycyl lysine isopeptide (Lys-Gly) (interchain with G-Cter in SUMO2) cross-link. 3 disordered regions span residues 777-802 (EPRF…VEKR), 877-924 (KKSA…GTSQ), and 936-965 (HPKA…KPHP). The span at 782–796 (FSKHHLSPSKKSRGR) shows a compositional bias: basic residues. Glycyl lysine isopeptide (Lys-Gly) (interchain with G-Cter in SUMO2) cross-links involve residues Lys-878, Lys-901, Lys-905, and Lys-920. Glycyl lysine isopeptide (Lys-Gly) (interchain with G-Cter in SUMO2) cross-links involve residues Lys-973, Lys-985, and Lys-998. Ser-1017 bears the Phosphoserine mark. Residues 1017–1055 (SPLDPAKEVSGKEKASEQESEGSKAAHSGHSGGTSEGHK) form a disordered region. Basic and acidic residues predominate over residues 1021–1040 (PAKEVSGKEKASEQESEGSK). Glycyl lysine isopeptide (Lys-Gly) (interchain with G-Cter in SUMO2) cross-links involve residues Lys-1040 and Lys-1055. Ser-1118 is subject to Phosphoserine.

It belongs to the ARID5B family. Methylation at Lys-340 prevents DNA-binding. Demethylation by PHF2 promotes recruitment of the PHF2-ARID5B complex to promoters.

The protein localises to the nucleus. Transcription coactivator that binds to the 5'-AATA[CT]-3' core sequence and plays a key role in adipogenesis and liver development. Acts by forming a complex with phosphorylated PHF2, which mediates demethylation at Lys-340, leading to target the PHF2-ARID5B complex to target promoters, where PHF2 mediates demethylation of dimethylated 'Lys-9' of histone H3 (H3K9me2), followed by transcription activation of target genes. The PHF2-ARID5B complex acts as a coactivator of HNF4A in liver. Required for adipogenesis: regulates triglyceride metabolism in adipocytes by regulating expression of adipogenic genes. Overexpression leads to induction of smooth muscle marker genes, suggesting that it may also act as a regulator of smooth muscle cell differentiation and proliferation. The sequence is that of AT-rich interactive domain-containing protein 5B (ARID5B) from Bos taurus (Bovine).